Consider the following 344-residue polypeptide: Probable dual-specificity RNA methyltransferase RlmN (344 aa).

The Proton acceptor role is filled by glutamate 92. The region spanning aspartate 98–aspartate 325 is the Radical SAM core domain. An intrachain disulfide couples cysteine 105 to cysteine 330. Residues cysteine 112, cysteine 116, and cysteine 119 each contribute to the [4Fe-4S] cluster site. Residues glycine 157 to glutamate 158, serine 189, serine 211 to histidine 213, and histidine 287 contribute to the S-adenosyl-L-methionine site. The active-site S-methylcysteine intermediate is the cysteine 330.

It belongs to the radical SAM superfamily. RlmN family. It depends on [4Fe-4S] cluster as a cofactor.

The protein localises to the cytoplasm. It catalyses the reaction adenosine(2503) in 23S rRNA + 2 reduced [2Fe-2S]-[ferredoxin] + 2 S-adenosyl-L-methionine = 2-methyladenosine(2503) in 23S rRNA + 5'-deoxyadenosine + L-methionine + 2 oxidized [2Fe-2S]-[ferredoxin] + S-adenosyl-L-homocysteine. The enzyme catalyses adenosine(37) in tRNA + 2 reduced [2Fe-2S]-[ferredoxin] + 2 S-adenosyl-L-methionine = 2-methyladenosine(37) in tRNA + 5'-deoxyadenosine + L-methionine + 2 oxidized [2Fe-2S]-[ferredoxin] + S-adenosyl-L-homocysteine. Its function is as follows. Specifically methylates position 2 of adenine 2503 in 23S rRNA and position 2 of adenine 37 in tRNAs. This Bacteroides fragilis (strain ATCC 25285 / DSM 2151 / CCUG 4856 / JCM 11019 / LMG 10263 / NCTC 9343 / Onslow / VPI 2553 / EN-2) protein is Probable dual-specificity RNA methyltransferase RlmN.